Here is a 63-residue protein sequence, read N- to C-terminus: Large ribosomal subunit protein bL33 (63 aa).

The protein belongs to the bacterial ribosomal protein bL33 family.

This chain is Large ribosomal subunit protein bL33, found in Gloeobacter violaceus (strain ATCC 29082 / PCC 7421).